The primary structure comprises 173 residues: uncharacterized protein (173 aa).

Belongs to the M.jannaschii MJ0150/MJ0739/MJ0745/MJ1460/MJ1642 family.

This is an uncharacterized protein from Methanocaldococcus jannaschii (strain ATCC 43067 / DSM 2661 / JAL-1 / JCM 10045 / NBRC 100440) (Methanococcus jannaschii).